Consider the following 349-residue polypeptide: Alanine racemase (349 aa).

The active-site Proton acceptor; specific for D-alanine is the lysine 35. Lysine 35 bears the N6-(pyridoxal phosphate)lysine mark. Arginine 130 contacts substrate. The active-site Proton acceptor; specific for L-alanine is the tyrosine 244. Methionine 292 contacts substrate.

It belongs to the alanine racemase family. It depends on pyridoxal 5'-phosphate as a cofactor.

The enzyme catalyses L-alanine = D-alanine. The protein operates within amino-acid biosynthesis; D-alanine biosynthesis; D-alanine from L-alanine: step 1/1. In terms of biological role, catalyzes the interconversion of L-alanine and D-alanine. May also act on other amino acids. In Cereibacter sphaeroides (strain ATCC 17025 / ATH 2.4.3) (Rhodobacter sphaeroides), this protein is Alanine racemase (alr).